The sequence spans 822 residues: Tyrosine-protein kinase Fer (822 aa).

Residues 1 to 259 form the F-BAR domain; it reads MGFGSDLKNS…SVEQIDPSTE (259 aa). An important for interaction with membranes containing phosphoinositides region spans residues 1-300; it reads MGFGSDLKNS…QANEIMWNNL (300 aa). 2 coiled-coil regions span residues 123-185 and 301-390; these read AEMI…HNQY and TAES…KVQE. At Y402 the chain carries Phosphotyrosine. S434 is modified (phosphoserine). The 91-residue stretch at 460–550 folds into the SH2 domain; the sequence is WYHGAIPRIE…KSGVVLLNPI (91 aa). In terms of domain architecture, Protein kinase spans 563-816; that stretch reads VILGELLGKG…FSELQKELTI (254 aa). Residues 569–577 and K591 each bind ATP; that span reads LGKGNFGEV. The residue at position 615 (Y615) is a Phosphotyrosine; by autocatalysis. D684 functions as the Proton acceptor in the catalytic mechanism. Y714 bears the Phosphotyrosine; by autocatalysis mark.

It belongs to the protein kinase superfamily. Tyr protein kinase family. Fes/fps subfamily. In terms of assembly, homotrimer. Interacts with ARHGDIA, IRS1, JAK1, NRP1, PIK3R1, PLEC and TMF1. Interacts with PPP1CA and regulates its phosphorylation at 'Thr-320'. Interacts with CTNND1, EGFR, FLT3, PECAM1, PDGFR and STAT3. Interacts (via SH2 domain) with CTTN. Interacts with HSP90; this stabilizes phosphorylated FER and protects FER against proteasomal degradation. Component of a complex that contains at least FER, CTTN and PTK2/FAK1. Autophosphorylated. In terms of processing, polyubiquitinated; this leads to proteasomal degradation. In terms of tissue distribution, isoform 1 is detected in normal colon and in fibroblasts (at protein level). Isoform 3 is detected in normal testis, in colon carcinoma-derived metastases in lung, liver and ovary, and in colon carcinoma and hepato carcinoma cell lines (at protein level). Isoform 3 is not detected in normal colon or in normal fibroblasts (at protein level). Widely expressed.

The protein resides in the cytoplasm. The protein localises to the cytoskeleton. It localises to the cell membrane. Its subcellular location is the cell projection. It is found in the cell junction. The protein resides in the membrane. The protein localises to the nucleus. It localises to the cell cortex. The enzyme catalyses L-tyrosyl-[protein] + ATP = O-phospho-L-tyrosyl-[protein] + ADP + H(+). Its activity is regulated as follows. Activated by phosphatidic acid binding. Activated by hydrogen peroxide (in vitro). Activated by reactive oxygen species (ROS). Tyrosine-protein kinase that acts downstream of cell surface receptors for growth factors and plays a role in the regulation of the actin cytoskeleton, microtubule assembly, lamellipodia formation, cell adhesion, cell migration and chemotaxis. Acts downstream of EGFR, KIT, PDGFRA and PDGFRB. Acts downstream of EGFR to promote activation of NF-kappa-B and cell proliferation. May play a role in the regulation of the mitotic cell cycle. Plays a role in the insulin receptor signaling pathway and in activation of phosphatidylinositol 3-kinase. Acts downstream of the activated FCER1 receptor and plays a role in FCER1 (high affinity immunoglobulin epsilon receptor)-mediated signaling in mast cells. Plays a role in the regulation of mast cell degranulation. Plays a role in leukocyte recruitment and diapedesis in response to bacterial lipopolysaccharide (LPS). Plays a role in synapse organization, trafficking of synaptic vesicles, the generation of excitatory postsynaptic currents and neuron-neuron synaptic transmission. Plays a role in neuronal cell death after brain damage. Phosphorylates CTTN, CTNND1, PTK2/FAK1, GAB1, PECAM1 and PTPN11. May phosphorylate JUP and PTPN1. Can phosphorylate STAT3, but the biological relevance of this depends on cell type and stimulus. The chain is Tyrosine-protein kinase Fer (FER) from Homo sapiens (Human).